The sequence spans 202 residues: V-type proton ATPase subunit E (202 aa).

It belongs to the V-ATPase E subunit family.

In terms of biological role, produces ATP from ADP in the presence of a proton gradient across the membrane. This chain is V-type proton ATPase subunit E, found in Halothermothrix orenii (strain H 168 / OCM 544 / DSM 9562).